Here is a 376-residue protein sequence, read N- to C-terminus: Protein RecA (376 aa).

65–72 (GPESSGKT) contacts ATP. Residues 316–376 (EHDEIFTSVR…GDDLSDDDIY (61 aa)) form a disordered region. Residues 331–350 (GEKKDSDEDPGDNKKSKDSA) show a composition bias toward basic and acidic residues. Acidic residues predominate over residues 366–376 (PGDDLSDDDIY).

This sequence belongs to the RecA family.

The protein localises to the cytoplasm. Functionally, can catalyze the hydrolysis of ATP in the presence of single-stranded DNA, the ATP-dependent uptake of single-stranded DNA by duplex DNA, and the ATP-dependent hybridization of homologous single-stranded DNAs. It interacts with LexA causing its activation and leading to its autocatalytic cleavage. This chain is Protein RecA, found in Oenococcus oeni (strain ATCC BAA-331 / PSU-1).